Consider the following 363-residue polypeptide: Branched-chain-amino-acid aminotransferase 2 (363 aa).

Lysine 197 bears the N6-(pyridoxal phosphate)lysine mark.

Belongs to the class-IV pyridoxal-phosphate-dependent aminotransferase family. Requires pyridoxal 5'-phosphate as cofactor.

The catalysed reaction is L-leucine + 2-oxoglutarate = 4-methyl-2-oxopentanoate + L-glutamate. It catalyses the reaction L-isoleucine + 2-oxoglutarate = (S)-3-methyl-2-oxopentanoate + L-glutamate. The enzyme catalyses L-valine + 2-oxoglutarate = 3-methyl-2-oxobutanoate + L-glutamate. Its pathway is amino-acid biosynthesis; L-isoleucine biosynthesis; L-isoleucine from 2-oxobutanoate: step 4/4. The protein operates within amino-acid biosynthesis; L-leucine biosynthesis; L-leucine from 3-methyl-2-oxobutanoate: step 4/4. It functions in the pathway amino-acid biosynthesis; L-valine biosynthesis; L-valine from pyruvate: step 4/4. Inhibited by canaline. In terms of biological role, transaminates branched-chain amino acids and ketoglutarate. The polypeptide is Branched-chain-amino-acid aminotransferase 2 (ilvK) (Bacillus subtilis (strain 168)).